Consider the following 286-residue polypeptide: ATP-binding protein ChvD (286 aa).

The 65-residue stretch at 21–85 (KLQDMIDSQN…DLLLLDEPTN (65 aa)) folds into the ABC transporter domain.

Belongs to the ABC transporter superfamily.

The induction of virG by growth under acidic conditions and by phosphate starvation, in the absence of plant inducers, is influenced by ChvD. This chain is ATP-binding protein ChvD (chvD), found in Rhizobium radiobacter (Agrobacterium tumefaciens).